The primary structure comprises 227 residues: Adapter protein MecA 1 (227 aa).

This sequence belongs to the MecA family. Homodimer.

Enables the recognition and targeting of unfolded and aggregated proteins to the ClpC protease or to other proteins involved in proteolysis. Acts negatively in the development of competence by binding ComK and recruiting it to the ClpCP protease. When overexpressed, inhibits sporulation. Also involved in Spx degradation by ClpC. The polypeptide is Adapter protein MecA 1 (mecA1) (Bacillus cereus (strain ATCC 14579 / DSM 31 / CCUG 7414 / JCM 2152 / NBRC 15305 / NCIMB 9373 / NCTC 2599 / NRRL B-3711)).